The following is a 332-amino-acid chain: Phosphate acyltransferase (332 aa).

Belongs to the PlsX family. Homodimer. Probably interacts with PlsY.

It localises to the cytoplasm. It catalyses the reaction a fatty acyl-[ACP] + phosphate = an acyl phosphate + holo-[ACP]. It functions in the pathway lipid metabolism; phospholipid metabolism. In terms of biological role, catalyzes the reversible formation of acyl-phosphate (acyl-PO(4)) from acyl-[acyl-carrier-protein] (acyl-ACP). This enzyme utilizes acyl-ACP as fatty acyl donor, but not acyl-CoA. The polypeptide is Phosphate acyltransferase (Streptococcus sanguinis (strain SK36)).